Reading from the N-terminus, the 78-residue chain is Large ribosomal subunit protein bL28 (78 aa).

A disordered region spans residues 1–20 (MSRVCQVTGKRPVTGNNRSH).

The protein belongs to the bacterial ribosomal protein bL28 family.

This chain is Large ribosomal subunit protein bL28, found in Vibrio atlanticus (strain LGP32) (Vibrio splendidus (strain Mel32)).